The primary structure comprises 863 residues: Leucine--tRNA ligase (863 aa).

Residues 41–51 (PYPSGRIHIGH) carry the 'HIGH' region motif. A 'KMSKS' region motif is present at residues 627-631 (KMSKS). ATP is bound at residue Lys-630.

This sequence belongs to the class-I aminoacyl-tRNA synthetase family.

The protein localises to the cytoplasm. The enzyme catalyses tRNA(Leu) + L-leucine + ATP = L-leucyl-tRNA(Leu) + AMP + diphosphate. This chain is Leucine--tRNA ligase, found in Jannaschia sp. (strain CCS1).